The primary structure comprises 601 residues: Elongation factor 4 (601 aa).

Positions 5-187 (EHIRNFSIIA…AIVERLPAPE (183 aa)) constitute a tr-type G domain. Residues 17–22 (DHGKST) and 134–137 (NKID) each bind GTP.

It belongs to the TRAFAC class translation factor GTPase superfamily. Classic translation factor GTPase family. LepA subfamily.

It localises to the cell inner membrane. The catalysed reaction is GTP + H2O = GDP + phosphate + H(+). Functionally, required for accurate and efficient protein synthesis under certain stress conditions. May act as a fidelity factor of the translation reaction, by catalyzing a one-codon backward translocation of tRNAs on improperly translocated ribosomes. Back-translocation proceeds from a post-translocation (POST) complex to a pre-translocation (PRE) complex, thus giving elongation factor G a second chance to translocate the tRNAs correctly. Binds to ribosomes in a GTP-dependent manner. This is Elongation factor 4 from Nitratidesulfovibrio vulgaris (strain ATCC 29579 / DSM 644 / CCUG 34227 / NCIMB 8303 / VKM B-1760 / Hildenborough) (Desulfovibrio vulgaris).